Reading from the N-terminus, the 229-residue chain is 3-beta-hydroxysteroid-Delta(8),Delta(7)-isomerase (229 aa).

4 helical membrane-spanning segments follow: residues 30–50 (WYIV…MWLL), 67–87 (VCWF…FVLY), 119–139 (IICM…WAVI), and 186–206 (FWFY…VLFF). The region spanning 62 to 205 (WRRLSVCWFA…LWLVIPGVLF (144 aa)) is the EXPERA domain.

The protein belongs to the EBP family. In terms of tissue distribution, highly expressed in liver, bowel, adrenal gland, testis, ovary, and uterus and less expressed in brain, cerebellum, skeletal muscle, and heart.

Its subcellular location is the endoplasmic reticulum membrane. The protein localises to the nucleus envelope. It localises to the cytoplasmic vesicle. The enzyme catalyses lathosterol = 5alpha-cholest-8-en-3beta-ol. The catalysed reaction is zymosterol = 5alpha-cholesta-7,24-dien-3beta-ol. It carries out the reaction 5,6alpha-epoxy-5alpha-cholestan-3beta-ol + H2O = 5alpha-cholestane-3beta,5,6beta-triol. It catalyses the reaction 5,6beta-epoxy-5beta-cholestan-3beta-ol + H2O = 5alpha-cholestane-3beta,5,6beta-triol. The protein operates within steroid biosynthesis; cholesterol biosynthesis. Its function is as follows. Isomerase that catalyzes the conversion of Delta(8)-sterols to their corresponding Delta(7)-isomers. Component of the microsomal antiestrogen binding site (AEBS), a multiproteic complex at the ER membrane that consists of an association between EBP and 7-dehydrocholesterol reductase/DHCR7. This complex is responsible for cholesterol-5,6-epoxide hydrolase (ChEH) activity, which consists in the hydration of cholesterol-5,6-epoxides (5,6-EC) into cholestane-3beta,5alpha,6beta-triol (CT). The precise role of each component of this complex has not been described yet. The chain is 3-beta-hydroxysteroid-Delta(8),Delta(7)-isomerase (EBP) from Cavia porcellus (Guinea pig).